We begin with the raw amino-acid sequence, 79 residues long: Large ribosomal subunit protein bL31 (79 aa).

This sequence belongs to the bacterial ribosomal protein bL31 family. Type A subfamily. As to quaternary structure, part of the 50S ribosomal subunit.

Its function is as follows. Binds the 23S rRNA. The protein is Large ribosomal subunit protein bL31 (rpmE) of Rickettsia bellii (strain RML369-C).